We begin with the raw amino-acid sequence, 601 residues long: Elongation factor 4 (601 aa).

A tr-type G domain is found at 7 to 189 (ELIRNFSIIA…ALVTRLPPPK (183 aa)). GTP contacts are provided by residues 19-24 (DHGKST) and 136-139 (NKID).

This sequence belongs to the TRAFAC class translation factor GTPase superfamily. Classic translation factor GTPase family. LepA subfamily.

It is found in the cell inner membrane. It carries out the reaction GTP + H2O = GDP + phosphate + H(+). In terms of biological role, required for accurate and efficient protein synthesis under certain stress conditions. May act as a fidelity factor of the translation reaction, by catalyzing a one-codon backward translocation of tRNAs on improperly translocated ribosomes. Back-translocation proceeds from a post-translocation (POST) complex to a pre-translocation (PRE) complex, thus giving elongation factor G a second chance to translocate the tRNAs correctly. Binds to ribosomes in a GTP-dependent manner. In Acidiphilium cryptum (strain JF-5), this protein is Elongation factor 4.